We begin with the raw amino-acid sequence, 383 residues long: Arginine biosynthesis bifunctional protein ArgJ 1 (383 aa).

Positions 1–25 (MTVTAPKGSTGGGCRRGSKESGQPD) are disordered. Residues threonine 146, lysine 168, threonine 179, glutamate 259, asparagine 378, and serine 383 each contribute to the substrate site. Threonine 179 acts as the Nucleophile in catalysis.

It belongs to the ArgJ family. In terms of assembly, heterotetramer of two alpha and two beta chains.

It localises to the cytoplasm. It carries out the reaction N(2)-acetyl-L-ornithine + L-glutamate = N-acetyl-L-glutamate + L-ornithine. The catalysed reaction is L-glutamate + acetyl-CoA = N-acetyl-L-glutamate + CoA + H(+). It participates in amino-acid biosynthesis; L-arginine biosynthesis; L-ornithine and N-acetyl-L-glutamate from L-glutamate and N(2)-acetyl-L-ornithine (cyclic): step 1/1. Its pathway is amino-acid biosynthesis; L-arginine biosynthesis; N(2)-acetyl-L-ornithine from L-glutamate: step 1/4. In terms of biological role, catalyzes two activities which are involved in the cyclic version of arginine biosynthesis: the synthesis of N-acetylglutamate from glutamate and acetyl-CoA as the acetyl donor, and of ornithine by transacetylation between N(2)-acetylornithine and glutamate. This is Arginine biosynthesis bifunctional protein ArgJ 1 from Streptomyces clavuligerus.